Reading from the N-terminus, the 383-residue chain is Prokineticin receptor 2 (383 aa).

Over 1-54 the chain is Extracellular; sequence MGDQNGNTSFAPDLNPPQDHVSLLPLNYSYGDYDIPLDDDEDVTKTQTFFAAKI. N-linked (GlcNAc...) asparagine glycosylation is found at Asn7 and Asn27. The helical transmembrane segment at 55–75 threads the bilayer; that stretch reads VIGVALAGIMLVCGVGNFVFI. Residues 76 to 89 are Cytoplasmic-facing; that stretch reads AALARYKKLRNLTN. A helical membrane pass occupies residues 90–110; the sequence is LLIANLAISDFLVAIVCCPFE. Over 111-136 the chain is Extracellular; that stretch reads MDYYVVRQLSWEHGHVLCASVNYLRT. Cys128 and Cys207 are disulfide-bonded. A helical membrane pass occupies residues 137–157; the sequence is VSLYVSTNALLAIAIDRYLAI. Over 158-170 the chain is Cytoplasmic; the sequence is VHPLKRMNYQTAS. Residues 171–191 form a helical membrane-spanning segment; that stretch reads FLIALVWMVSILIAIPSAYFT. At 192–222 the chain is on the extracellular side; sequence TETILVIVKNQEKLFCGQIWPVDQQLYYKSY. The helical transmembrane segment at 223 to 243 threads the bilayer; that stretch reads FLFVFGLEFVGPVVTMTLCYA. Over 244-272 the chain is Cytoplasmic; that stretch reads RISQELWFKAVPGFQTEQIRKRLRCRRKT. Residues 273 to 293 traverse the membrane as a helical segment; that stretch reads VLLLMGILTAYVLCWAPFYGF. The Extracellular portion of the chain corresponds to 294–312; it reads TIVRDFFPTLVVKEKHYLT. Residues 313–333 traverse the membrane as a helical segment; it reads AFYVVECIAMSNSMINTICFV. The Cytoplasmic segment spans residues 334-383; the sequence is TVKNNTMKYFKKMLLLHWRPSHYGSKSSADLDLKTSGVPATEEVDCIRLK.

This sequence belongs to the G-protein coupled receptor 1 family. As to quaternary structure, homodimer. As to expression, abundantly expressed in the CNS and reproductive organs with the highest levels in the cerebrum, cerebellum, testis and ovary.

It localises to the cell membrane. Receptor for prokineticin 2. Exclusively coupled to the G(q) subclass of heteromeric G proteins. Activation leads to mobilization of calcium, stimulation of phosphoinositide turnover and activation of p44/p42 mitogen-activated protein kinase. The protein is Prokineticin receptor 2 (Prokr2) of Rattus norvegicus (Rat).